Consider the following 309-residue polypeptide: Probable manganese-dependent inorganic pyrophosphatase (309 aa).

Mn(2+) is bound by residues H9, D13, D15, D75, H97, and D149.

It belongs to the PPase class C family. Mn(2+) serves as cofactor.

The protein localises to the cytoplasm. It catalyses the reaction diphosphate + H2O = 2 phosphate + H(+). The protein is Probable manganese-dependent inorganic pyrophosphatase of Bacillus cereus (strain G9842).